A 207-amino-acid chain; its full sequence is Large ribosomal subunit protein uL4 (207 aa).

The tract at residues 47–78 (GTASSKTRAEVRGGGKKPWRQKGTGRARVGSS) is disordered. Basic residues predominate over residues 60–71 (GGKKPWRQKGTG).

The protein belongs to the universal ribosomal protein uL4 family. In terms of assembly, part of the 50S ribosomal subunit.

One of the primary rRNA binding proteins, this protein initially binds near the 5'-end of the 23S rRNA. It is important during the early stages of 50S assembly. It makes multiple contacts with different domains of the 23S rRNA in the assembled 50S subunit and ribosome. Its function is as follows. Forms part of the polypeptide exit tunnel. The sequence is that of Large ribosomal subunit protein uL4 from Syntrophomonas wolfei subsp. wolfei (strain DSM 2245B / Goettingen).